Reading from the N-terminus, the 101-residue chain is MNQKIRIKLKSYDHNLVDKSSERIVRAVKATGAVVSGPIPLPTEKEIFTVLRSPHVNKKSRDQYQLCTYKRLVDIYSTSSKTVDALMKLELPSGVDVEIKV.

Belongs to the universal ribosomal protein uS10 family. In terms of assembly, part of the 30S ribosomal subunit.

Functionally, involved in the binding of tRNA to the ribosomes. This is Small ribosomal subunit protein uS10 from Cytophaga hutchinsonii (strain ATCC 33406 / DSM 1761 / CIP 103989 / NBRC 15051 / NCIMB 9469 / D465).